A 764-amino-acid polypeptide reads, in one-letter code: Thyrotropin receptor (764 aa).

Positions 1-21 (MSLTPLLQLALLLALPRSLRG) are cleaved as a signal peptide. Over 22-413 (KGCPSPPCEC…EFNPCEDIMG (392 aa)) the chain is Extracellular. Cysteines 31 and 41 form a disulfide. Residues asparagine 77 and asparagine 99 are each glycosylated (N-linked (GlcNAc...) asparagine). 6 LRR repeats span residues 125–150 (LPLL…VYST), 151–174 (DVFF…AFQG), 176–199 (CNET…AFNG), 201–223 (KLDA…AFGG), 225–248 (FSGP…GLEH), and 250–271 (KELI…SFLH). Residues asparagine 177 and asparagine 198 are each glycosylated (N-linked (GlcNAc...) asparagine). N-linked (GlcNAc...) asparagine glycosylation is present at asparagine 302. A Sulfotyrosine modification is found at tyrosine 385. The helical transmembrane segment at 414 to 441 (YRFLRIVVWFVSLLALLGNVFVLVILLT) threads the bilayer. The Cytoplasmic portion of the chain corresponds to 442–450 (SHYKLTVPR). A helical membrane pass occupies residues 451 to 473 (FLMCNLAFADFCMGMYLLLIASV). Topologically, residues 474 to 494 (DLYTQSEYYNHAIDWQTGPGC) are extracellular. Cysteines 494 and 569 form a disulfide. Residues 495–517 (NTAGFFTVFASELSVYTLTVITL) traverse the membrane as a helical segment. Residues 518–537 (ERWYAITFAMRLDRKIRLRH) lie on the Cytoplasmic side of the membrane. A helical transmembrane segment spans residues 538–560 (AYAIMAGGWVCCFLLALLPLVGI). The Extracellular portion of the chain corresponds to 561-580 (SSYAKVSICLPMDTETPLAL). A helical transmembrane segment spans residues 581 to 602 (AYIILVLLLNIVAFTIVCSCYV). The Cytoplasmic portion of the chain corresponds to 603–625 (KIYITVRNPQYNPGDKDTKIAKR). The chain crosses the membrane as a helical span at residues 626–649 (MAVLIFTDFMCMAPISFYALSALM). The Extracellular portion of the chain corresponds to 650 to 660 (NKPLITVTNSK). A helical transmembrane segment spans residues 661 to 682 (ILLVLFYPLNSCANPFLYAIFT). At 683-764 (KAFQRDVFIL…ISKEYKQPVL (82 aa)) the chain is on the cytoplasmic side. The PDZ-binding signature appears at 762-764 (PVL).

The protein belongs to the G-protein coupled receptor 1 family. FSH/LSH/TSH subfamily. In terms of assembly, interacts with heterodimer GPHA2:GPHB5; this interaction stimulates cAMP production. Interacts (via the PDZ-binding motif) with SCRIB; regulates TSHR trafficking and function. Post-translationally, glycosylated. Sulfated. Sulfation on Tyr-385 plays a role in thyrotropin receptor binding and activation. Expressed in thyroide cells (at protein level).

The protein resides in the cell membrane. It is found in the basolateral cell membrane. Functionally, receptor for the thyroid-stimulating hormone (TSH) or thyrotropin. Also acts as a receptor for the heterodimeric glycoprotein hormone (GPHA2:GPHB5) or thyrostimulin. The activity of this receptor is mediated by G proteins which activate adenylate cyclase. Plays a central role in controlling thyroid cell metabolism. The sequence is that of Thyrotropin receptor (TSHR) from Sus scrofa (Pig).